The chain runs to 675 residues: Cysteine-rich receptor-like protein kinase 25 (675 aa).

An N-terminal signal peptide occupies residues 1–25 (MSSCFKSSVSLFSVFLFMILKTVTS). Residues 26–281 (DPTYLYHICP…IPSEKGKGKN (256 aa)) lie on the Extracellular side of the membrane. Gnk2-homologous domains lie at 28–134 (TYLY…NQSI) and 140–247 (IRPG…LYPF). 10 N-linked (GlcNAc...) asparagine glycosylation sites follow: N36, N43, N77, N106, N131, N151, N161, N188, N249, and N281. The chain crosses the membrane as a helical span at residues 282–302 (LTVIVTAIAVPVSVCVLLLGA). The Cytoplasmic segment spans residues 303–675 (MCWLLARRRN…DSSITIVYPR (373 aa)). A Protein kinase domain is found at 347–622 (FSESNKLGHG…DILVMMNSFT (276 aa)). ATP contacts are provided by residues 353-361 (LGHGGFGEV) and K375. At Y420 the chain carries Phosphotyrosine. D472 (proton acceptor) is an active-site residue. S476 bears the Phosphoserine mark. At T512 the chain carries Phosphothreonine. A Phosphotyrosine modification is found at Y520. Residues 638-661 (MKDSRDPRSGGSASDHSATSKSLP) are disordered. Positions 648 to 661 (GSASDHSATSKSLP) are enriched in polar residues.

It belongs to the protein kinase superfamily. Ser/Thr protein kinase family. CRK subfamily.

The protein localises to the membrane. It carries out the reaction L-seryl-[protein] + ATP = O-phospho-L-seryl-[protein] + ADP + H(+). The enzyme catalyses L-threonyl-[protein] + ATP = O-phospho-L-threonyl-[protein] + ADP + H(+). The chain is Cysteine-rich receptor-like protein kinase 25 (CRK25) from Arabidopsis thaliana (Mouse-ear cress).